Consider the following 193-residue polypeptide: Probable GTP-binding protein EngB (193 aa).

The 172-residue stretch at 22-193 (SFPEIVFAGR…LAHFDQYICQ (172 aa)) folds into the EngB-type G domain. Residues 30–37 (GRSNVGKS), 57–61 (GKTRL), 75–78 (DLPG), 142–145 (TKYD), and 172–174 (YSS) contribute to the GTP site. Residues Ser-37 and Thr-59 each contribute to the Mg(2+) site.

It belongs to the TRAFAC class TrmE-Era-EngA-EngB-Septin-like GTPase superfamily. EngB GTPase family. It depends on Mg(2+) as a cofactor.

Its function is as follows. Necessary for normal cell division and for the maintenance of normal septation. This is Probable GTP-binding protein EngB from Pelodictyon phaeoclathratiforme (strain DSM 5477 / BU-1).